Reading from the N-terminus, the 159-residue chain is Transcription elongation factor A protein-like 1 (159 aa).

The segment at 1-99 (MDKPRKENEE…CGVGKHKLEE (99 aa)) is disordered. Residues 17 to 34 (KTDEERPPVEHSPEKQSL) are compositionally biased toward basic and acidic residues. Residues 37-54 (QSSEEQSSEEEFFPEELL) are compositionally biased toward acidic residues. The span at 64–80 (SEERPPQEGLSRKDLFE) shows a compositional bias: basic and acidic residues.

Belongs to the TFS-II family. TFA subfamily.

It localises to the nucleus. May be involved in transcriptional regulation. Modulates various viral and cellular promoters in a promoter context-dependent manner. Does not bind DNA directly. This Ateles geoffroyi (Black-handed spider monkey) protein is Transcription elongation factor A protein-like 1.